Here is a 156-residue protein sequence, read N- to C-terminus: MKKVTHIVEELVTPIVTHMGLELVDIEYVKEGKNWFLRVFIDSPTGIDIDQCGVVSEQLSEKLDEIDPIPHNYFLEVSSPGAERPLKKARDFERAVGKNVYVKTYEPIDGQKEFEGLLTAFDGQTVTVEVKVKTKKKTITIPYEKVASARLAVIFS.

It belongs to the RimP family.

The protein resides in the cytoplasm. Its function is as follows. Required for maturation of 30S ribosomal subunits. The protein is Ribosome maturation factor RimP of Anoxybacillus flavithermus (strain DSM 21510 / WK1).